A 164-amino-acid polypeptide reads, in one-letter code: Small ribosomal subunit protein uS5 (164 aa).

The S5 DRBM domain maps to 10–73; that stretch reads LEERVVAINR…EAAKKNLIEV (64 aa).

It belongs to the universal ribosomal protein uS5 family. As to quaternary structure, part of the 30S ribosomal subunit. Contacts proteins S4 and S8.

In terms of biological role, with S4 and S12 plays an important role in translational accuracy. Functionally, located at the back of the 30S subunit body where it stabilizes the conformation of the head with respect to the body. The polypeptide is Small ribosomal subunit protein uS5 (Streptococcus thermophilus (strain CNRZ 1066)).